The following is a 505-amino-acid chain: Exodeoxyribonuclease 7 large subunit (505 aa).

The disordered stretch occupies residues 466 to 505 (SGDRDAVIDGEGGPAPAPTAPAPKPRPKPAAPPAGQGDLF). Residues 480–497 (APAPTAPAPKPRPKPAAP) show a composition bias toward pro residues.

The protein belongs to the XseA family. In terms of assembly, heterooligomer composed of large and small subunits.

The protein resides in the cytoplasm. The catalysed reaction is Exonucleolytic cleavage in either 5'- to 3'- or 3'- to 5'-direction to yield nucleoside 5'-phosphates.. Functionally, bidirectionally degrades single-stranded DNA into large acid-insoluble oligonucleotides, which are then degraded further into small acid-soluble oligonucleotides. This chain is Exodeoxyribonuclease 7 large subunit, found in Caulobacter vibrioides (strain NA1000 / CB15N) (Caulobacter crescentus).